Here is a 978-residue protein sequence, read N- to C-terminus: uncharacterized protein (978 aa).

A signal peptide spans 1–27 (MHSWKKKLVVSQLALACTLAITSQANA). One can recognise an Autotransporter domain in the interval 713–978 (GLADNGGAWV…SANVGVKYTW (266 aa)).

This is an uncharacterized protein from Salmonella typhimurium (strain LT2 / SGSC1412 / ATCC 700720).